The chain runs to 243 residues: Probable transcriptional regulatory protein LSEI_1022 (243 aa).

The segment at 1–23 (MSGHSKWHNIQGRKNAQDSKRGK) is disordered.

This sequence belongs to the TACO1 family.

Its subcellular location is the cytoplasm. The sequence is that of Probable transcriptional regulatory protein LSEI_1022 from Lacticaseibacillus paracasei (strain ATCC 334 / BCRC 17002 / CCUG 31169 / CIP 107868 / KCTC 3260 / NRRL B-441) (Lactobacillus paracasei).